A 433-amino-acid polypeptide reads, in one-letter code: Adenylosuccinate synthetase (433 aa).

GTP-binding positions include Gly-12–Lys-18 and Gly-40–Thr-42. Asp-13 functions as the Proton acceptor in the catalytic mechanism. Residues Asp-13 and Gly-40 each contribute to the Mg(2+) site. Residues Asp-13–Lys-16, Asn-38–His-41, Thr-130, Arg-144, Gln-225, Thr-240, and Arg-304 contribute to the IMP site. The active-site Proton donor is the His-41. Ala-300–Arg-306 contributes to the substrate binding site. Residues Arg-306, Lys-332–Asp-334, and Ser-414–Gly-416 contribute to the GTP site.

The protein belongs to the adenylosuccinate synthetase family. In terms of assembly, homodimer. Mg(2+) serves as cofactor.

It is found in the cytoplasm. It carries out the reaction IMP + L-aspartate + GTP = N(6)-(1,2-dicarboxyethyl)-AMP + GDP + phosphate + 2 H(+). The protein operates within purine metabolism; AMP biosynthesis via de novo pathway; AMP from IMP: step 1/2. In terms of biological role, plays an important role in the de novo pathway of purine nucleotide biosynthesis. Catalyzes the first committed step in the biosynthesis of AMP from IMP. This chain is Adenylosuccinate synthetase, found in Geobacter sulfurreducens (strain ATCC 51573 / DSM 12127 / PCA).